The chain runs to 252 residues: 3-dehydroquinate dehydratase (252 aa).

3-dehydroquinate is bound by residues S21, 46–48 (EWR), and R82. The active-site Proton donor/acceptor is H143. The active-site Schiff-base intermediate with substrate is the K170. 3-dehydroquinate is bound by residues R213, S232, and Q236.

This sequence belongs to the type-I 3-dehydroquinase family. In terms of assembly, homodimer.

It carries out the reaction 3-dehydroquinate = 3-dehydroshikimate + H2O. It functions in the pathway metabolic intermediate biosynthesis; chorismate biosynthesis; chorismate from D-erythrose 4-phosphate and phosphoenolpyruvate: step 3/7. In terms of biological role, involved in the third step of the chorismate pathway, which leads to the biosynthesis of aromatic amino acids. Catalyzes the cis-dehydration of 3-dehydroquinate (DHQ) and introduces the first double bond of the aromatic ring to yield 3-dehydroshikimate. The protein is 3-dehydroquinate dehydratase of Escherichia coli O8 (strain IAI1).